We begin with the raw amino-acid sequence, 529 residues long: Kunitz-type protease inhibitor 1 (529 aa).

Positions 1–35 are cleaved as a signal peptide; it reads MAPARTMARARLAPAGIPAVALWLLCTLGLQGTQA. Residues 57-140 enclose the MANSC domain; sequence GVPGFVLDTN…FAPREGFINY (84 aa). Asn66 and Asn235 each carry an N-linked (GlcNAc...) asparagine glycan. In terms of domain architecture, BPTI/Kunitz inhibitor 1 spans 250 to 300; the sequence is CLASNKVGRCRGSFPRWYYDPTEQICKSFVYGGCLGNKNNYLREEECILAC. 9 disulfide bridges follow: Cys250/Cys300, Cys259/Cys283, Cys275/Cys296, Cys335/Cys347, Cys342/Cys360, Cys354/Cys369, Cys391/Cys441, Cys400/Cys424, and Cys416/Cys437. The region spanning 334–370 is the LDL-receptor class A domain; it reads TCQPTQFRCSNGCCIDSFLECDDTPNCPDASDEAACE. The region spanning 391 to 441 is the BPTI/Kunitz inhibitor 2 domain; sequence CVDLPDTGLCKESIPRWYYNPFSEHCARFTYGGCYGNKNNFEEEQQCLESC. Asn523 is a glycosylation site (N-linked (GlcNAc...) asparagine).

In terms of assembly, interacts with HGFAC. Interacts with TMPRSS13; the interaction promotes the phosphorylation and cell membrane localization of TMPRSS13.

Its subcellular location is the secreted. It localises to the cytoplasm. The protein localises to the cell membrane. Inhibitor of HGFAC. Inhibits serine protease activity of ST14/matriptase in vitro. Inhibits serine protease activity of TMPRSS13, via the BPTI/Kunitz inhibitor 1 domain. This is Kunitz-type protease inhibitor 1 (SPINT1) from Homo sapiens (Human).